The chain runs to 404 residues: Transcription factor sem-2 (404 aa).

The segment at residues 93–161 (IKRPMNAFMV…CHMQEYPDYK (69 aa)) is a DNA-binding region (HMG box). Disordered regions lie at residues 158-218 (PDYK…QFQN) and 321-359 (HTSPPSVDQDDMRSLSSGSSGYADCSASEQSTSSPNSAG). Residues 177–199 (QQPAQPQAPQQQQAPPRGASPQA) show a composition bias toward low complexity. 2 stretches are compositionally biased toward polar residues: residues 207–218 (TDQQSETQQFQN) and 347–359 (ASEQSTSSPNSAG).

Its subcellular location is the nucleus. Functionally, probable transcription factor required for embryogenesis, vulval development and cell fate specification of the postembryonic mesoderm (also known as the M lineage). Specifically, required for the specification of sex myoblast cells and their development into the muscles that are necessary for egg-laying. In addition, may be involved in RME GABAergic motor neuron progenitor cell fate specification. In Caenorhabditis elegans, this protein is Transcription factor sem-2.